Reading from the N-terminus, the 331-residue chain is Pantothenate kinase (331 aa).

109-116 provides a ligand contact to ATP; that stretch reads GSVAVGKS.

Belongs to the prokaryotic pantothenate kinase family.

Its subcellular location is the cytoplasm. It carries out the reaction (R)-pantothenate + ATP = (R)-4'-phosphopantothenate + ADP + H(+). It functions in the pathway cofactor biosynthesis; coenzyme A biosynthesis; CoA from (R)-pantothenate: step 1/5. In Rhizobium meliloti (strain 1021) (Ensifer meliloti), this protein is Pantothenate kinase.